The following is a 446-amino-acid chain: D-inositol 3-phosphate glycosyltransferase (446 aa).

The disordered stretch occupies residues 1–21; that stretch reads MSHYVGRLGRRSPAGSGRLRL. H34 provides a ligand contact to 1D-myo-inositol 3-phosphate. Residues 40 to 41 and G48 each bind UDP-N-acetyl-alpha-D-glucosamine; that span reads QP. 1D-myo-inositol 3-phosphate contacts are provided by residues 45 to 50, K103, Y136, T160, and R180; that span reads DAGGMN. UDP-N-acetyl-alpha-D-glucosamine is bound by residues R255, K260, and V321. Residues F330, R331, and A333 each coordinate Mg(2+). Residues E343 and E351 each coordinate UDP-N-acetyl-alpha-D-glucosamine. Mg(2+) is bound at residue T357.

It belongs to the glycosyltransferase group 1 family. MshA subfamily. As to quaternary structure, homodimer.

The enzyme catalyses 1D-myo-inositol 3-phosphate + UDP-N-acetyl-alpha-D-glucosamine = 1D-myo-inositol 2-acetamido-2-deoxy-alpha-D-glucopyranoside 3-phosphate + UDP + H(+). In terms of biological role, catalyzes the transfer of a N-acetyl-glucosamine moiety to 1D-myo-inositol 3-phosphate to produce 1D-myo-inositol 2-acetamido-2-deoxy-glucopyranoside 3-phosphate in the mycothiol biosynthesis pathway. This Streptomyces scabiei (strain 87.22) protein is D-inositol 3-phosphate glycosyltransferase.